Consider the following 93-residue polypeptide: N-myc protein (93 aa).

Efficient DNA binding requires dimerization with another bHLH protein. Binds DNA as a heterodimer with MAX. In terms of tissue distribution, barely detectable in most tissues assayed.

Its subcellular location is the nucleus. In terms of biological role, may function as a transcription factor. This Danio rerio (Zebrafish) protein is N-myc protein (mycn).